Consider the following 162-residue polypeptide: G/U mismatch-specific DNA glycosylase (162 aa).

It belongs to the uracil-DNA glycosylase (UDG) superfamily. TDG/mug family. In terms of assembly, binds DNA as a monomer.

It localises to the cytoplasm. The catalysed reaction is Specifically hydrolyzes mismatched double-stranded DNA and polynucleotides, releasing free uracil.. Its function is as follows. Excises ethenocytosine and uracil, which can arise by alkylation or deamination of cytosine, respectively, from the corresponding mispairs with guanine in ds-DNA. It is capable of hydrolyzing the carbon-nitrogen bond between the sugar-phosphate backbone of the DNA and the mispaired base. The complementary strand guanine functions in substrate recognition. Required for DNA damage lesion repair in stationary-phase cells. The protein is G/U mismatch-specific DNA glycosylase of Serratia proteamaculans (strain 568).